We begin with the raw amino-acid sequence, 275 residues long: Ribosomal RNA small subunit methyltransferase A (275 aa).

S-adenosyl-L-methionine is bound by residues N20, L22, G47, E68, D90, and N110.

It belongs to the class I-like SAM-binding methyltransferase superfamily. rRNA adenine N(6)-methyltransferase family. RsmA subfamily.

The protein resides in the cytoplasm. It catalyses the reaction adenosine(1518)/adenosine(1519) in 16S rRNA + 4 S-adenosyl-L-methionine = N(6)-dimethyladenosine(1518)/N(6)-dimethyladenosine(1519) in 16S rRNA + 4 S-adenosyl-L-homocysteine + 4 H(+). Specifically dimethylates two adjacent adenosines (A1518 and A1519) in the loop of a conserved hairpin near the 3'-end of 16S rRNA in the 30S particle. May play a critical role in biogenesis of 30S subunits. This is Ribosomal RNA small subunit methyltransferase A from Chlorobaculum tepidum (strain ATCC 49652 / DSM 12025 / NBRC 103806 / TLS) (Chlorobium tepidum).